A 249-amino-acid chain; its full sequence is Ditrans,polycis-undecaprenyl-diphosphate synthase ((2E,6E)-farnesyl-diphosphate specific) (249 aa).

Asp26 is a catalytic residue. Asp26 provides a ligand contact to Mg(2+). Substrate contacts are provided by residues 27 to 30 (GNGR), Trp31, Arg39, His43, and 71 to 73 (SRE). The active-site Proton acceptor is Asn74. Substrate-binding positions include Trp75, Arg77, Arg194, and 200–202 (RIS). Position 213 (Glu213) interacts with Mg(2+).

The protein belongs to the UPP synthase family. As to quaternary structure, homodimer. Mg(2+) serves as cofactor.

The catalysed reaction is 8 isopentenyl diphosphate + (2E,6E)-farnesyl diphosphate = di-trans,octa-cis-undecaprenyl diphosphate + 8 diphosphate. Functionally, catalyzes the sequential condensation of isopentenyl diphosphate (IPP) with (2E,6E)-farnesyl diphosphate (E,E-FPP) to yield (2Z,6Z,10Z,14Z,18Z,22Z,26Z,30Z,34E,38E)-undecaprenyl diphosphate (di-trans,octa-cis-UPP). UPP is the precursor of glycosyl carrier lipid in the biosynthesis of bacterial cell wall polysaccharide components such as peptidoglycan and lipopolysaccharide. The protein is Ditrans,polycis-undecaprenyl-diphosphate synthase ((2E,6E)-farnesyl-diphosphate specific) of Buchnera aphidicola subsp. Schizaphis graminum (strain Sg).